Here is a 430-residue protein sequence, read N- to C-terminus: S-adenosylmethionine synthase (430 aa).

His-14 lines the ATP pocket. Asp-16 contributes to the Mg(2+) binding site. Glu-42 is a K(+) binding site. L-methionine-binding residues include Glu-55 and Gln-98. The segment at 98–108 (QSPDINRGVER) is flexible loop. Residues 164 to 166 (DAK), 254 to 255 (KF), Asp-263, 269 to 270 (RK), Ala-286, and Lys-290 contribute to the ATP site. Asp-263 serves as a coordination point for L-methionine. Residue Lys-294 participates in L-methionine binding.

Belongs to the AdoMet synthase family. In terms of assembly, homotetramer; dimer of dimers. It depends on Mg(2+) as a cofactor. Requires K(+) as cofactor.

The protein localises to the cytoplasm. It carries out the reaction L-methionine + ATP + H2O = S-adenosyl-L-methionine + phosphate + diphosphate. The protein operates within amino-acid biosynthesis; S-adenosyl-L-methionine biosynthesis; S-adenosyl-L-methionine from L-methionine: step 1/1. Functionally, catalyzes the formation of S-adenosylmethionine (AdoMet) from methionine and ATP. The overall synthetic reaction is composed of two sequential steps, AdoMet formation and the subsequent tripolyphosphate hydrolysis which occurs prior to release of AdoMet from the enzyme. This is S-adenosylmethionine synthase from Bacteroides thetaiotaomicron (strain ATCC 29148 / DSM 2079 / JCM 5827 / CCUG 10774 / NCTC 10582 / VPI-5482 / E50).